The sequence spans 109 residues: Prefoldin subunit 1 (109 aa).

N-acetylserine is present on Ser-2.

This sequence belongs to the prefoldin subunit beta family. Heterohexamer of two PFD-alpha type and four PFD-beta type subunits.

The protein localises to the cytoplasm. Its function is as follows. Binds specifically to cytosolic chaperonin (c-CPN) and transfers target proteins to it. Binds to nascent polypeptide chain and promotes folding in an environment in which there are many competing pathways for nonnative proteins. The protein is Prefoldin subunit 1 (PFD1) of Saccharomyces cerevisiae (strain ATCC 204508 / S288c) (Baker's yeast).